The primary structure comprises 102 residues: Glutaredoxin 1 (102 aa).

In terms of domain architecture, Glutaredoxin spans 1 to 96 (MNKAILHTII…KLLEGQPKKK (96 aa)). Residues Cys17 and Cys20 are joined by a disulfide bond.

This sequence belongs to the glutaredoxin family. Monomer.

It localises to the cytoplasm. In terms of biological role, has a glutathione-disulfide oxidoreductase activity in the presence of NADPH and glutathione reductase. Reduces low molecular weight disulfides and proteins. This chain is Glutaredoxin 1 (grxC1), found in Rickettsia felis (strain ATCC VR-1525 / URRWXCal2) (Rickettsia azadi).